The primary structure comprises 83 residues: Disintegrin isoform D-2 (83 aa).

One can recognise a Disintegrin domain in the interval 2–83 (PPVCGNELLE…GKSSDCPWNH (82 aa)). Intrachain disulfides connect Cys-5/Cys-24, Cys-16/Cys-34, Cys-18/Cys-29, Cys-28/Cys-51, Cys-42/Cys-48, Cys-47/Cys-72, and Cys-60/Cys-79. The Cell attachment site motif lies at 64–66 (RGD).

Belongs to the venom metalloproteinase (M12B) family. P-II subfamily. P-IIa sub-subfamily. Monomer (disintegrin). As to expression, expressed by the venom gland.

The protein localises to the secreted. In terms of biological role, inhibits fibrinogen interaction with platelets. Acts by binding to the alpha-IIb/beta-3 (ITGA2B/ITGB3) on the platelet surface and inhibits aggregation induced by ADP, thrombin, platelet-activating factor and collagen. The chain is Disintegrin isoform D-2 from Bitis arietans (African puff adder).